We begin with the raw amino-acid sequence, 227 residues long: Cytochrome c oxidase subunit 2 (227 aa).

Topologically, residues 1–14 are mitochondrial intermembrane; that stretch reads MAYPFQLGLQDATS. A helical membrane pass occupies residues 15 to 45; it reads PIMEELLHFHDHTLMIVFLISSLVLYIISLM. At 46–59 the chain is on the mitochondrial matrix side; it reads LTTKLTHTSTMDAQ. Residues 60 to 87 traverse the membrane as a helical segment; sequence EVETVWTILPAIILILIALPSLRILYMM. At 88–227 the chain is on the mitochondrial intermembrane side; it reads DEINNPSLTV…YFETWSALMV (140 aa). Cu cation-binding residues include histidine 161, cysteine 196, glutamate 198, cysteine 200, histidine 204, and methionine 207. Glutamate 198 provides a ligand contact to Mg(2+). Phosphotyrosine is present on tyrosine 218.

The protein belongs to the cytochrome c oxidase subunit 2 family. In terms of assembly, component of the cytochrome c oxidase (complex IV, CIV), a multisubunit enzyme composed of 14 subunits. The complex is composed of a catalytic core of 3 subunits MT-CO1, MT-CO2 and MT-CO3, encoded in the mitochondrial DNA, and 11 supernumerary subunits COX4I, COX5A, COX5B, COX6A, COX6B, COX6C, COX7A, COX7B, COX7C, COX8 and NDUFA4, which are encoded in the nuclear genome. The complex exists as a monomer or a dimer and forms supercomplexes (SCs) in the inner mitochondrial membrane with NADH-ubiquinone oxidoreductase (complex I, CI) and ubiquinol-cytochrome c oxidoreductase (cytochrome b-c1 complex, complex III, CIII), resulting in different assemblies (supercomplex SCI(1)III(2)IV(1) and megacomplex MCI(2)III(2)IV(2)). Found in a complex with TMEM177, COA6, COX18, COX20, SCO1 and SCO2. Interacts with TMEM177 in a COX20-dependent manner. Interacts with COX20. Interacts with COX16. Cu cation serves as cofactor.

It localises to the mitochondrion inner membrane. The enzyme catalyses 4 Fe(II)-[cytochrome c] + O2 + 8 H(+)(in) = 4 Fe(III)-[cytochrome c] + 2 H2O + 4 H(+)(out). Functionally, component of the cytochrome c oxidase, the last enzyme in the mitochondrial electron transport chain which drives oxidative phosphorylation. The respiratory chain contains 3 multisubunit complexes succinate dehydrogenase (complex II, CII), ubiquinol-cytochrome c oxidoreductase (cytochrome b-c1 complex, complex III, CIII) and cytochrome c oxidase (complex IV, CIV), that cooperate to transfer electrons derived from NADH and succinate to molecular oxygen, creating an electrochemical gradient over the inner membrane that drives transmembrane transport and the ATP synthase. Cytochrome c oxidase is the component of the respiratory chain that catalyzes the reduction of oxygen to water. Electrons originating from reduced cytochrome c in the intermembrane space (IMS) are transferred via the dinuclear copper A center (CU(A)) of subunit 2 and heme A of subunit 1 to the active site in subunit 1, a binuclear center (BNC) formed by heme A3 and copper B (CU(B)). The BNC reduces molecular oxygen to 2 water molecules using 4 electrons from cytochrome c in the IMS and 4 protons from the mitochondrial matrix. This chain is Cytochrome c oxidase subunit 2 (MT-CO2), found in Canis mesomelas elongae (Eastern African black-backed jackal).